A 284-amino-acid polypeptide reads, in one-letter code: Undecaprenyl-diphosphatase (284 aa).

Helical transmembrane passes span 7-27 (IILG…TGHL), 44-64 (EMFD…LYFH), 90-110 (LWLK…PLND), 116-136 (FYHF…FIVI), 167-187 (VLSL…ALLI), 197-217 (FTFF…ILHF), 229-249 (FGVL…AIKF), and 259-279 (FTFF…YAAF).

It belongs to the UppP family.

The protein localises to the cell membrane. The enzyme catalyses di-trans,octa-cis-undecaprenyl diphosphate + H2O = di-trans,octa-cis-undecaprenyl phosphate + phosphate + H(+). Functionally, catalyzes the dephosphorylation of undecaprenyl diphosphate (UPP). Confers resistance to bacitracin. The polypeptide is Undecaprenyl-diphosphatase (Lactococcus lactis subsp. cremoris (strain MG1363)).